We begin with the raw amino-acid sequence, 296 residues long: Lipoyl synthase (296 aa).

[4Fe-4S] cluster contacts are provided by Cys35, Cys40, Cys46, Cys61, Cys65, Cys68, and Ser274. Positions 47–263 (WSSKHVTVMI…KEAAYARGFL (217 aa)) constitute a Radical SAM core domain.

Belongs to the radical SAM superfamily. Lipoyl synthase family. [4Fe-4S] cluster is required as a cofactor.

The protein resides in the cytoplasm. It catalyses the reaction [[Fe-S] cluster scaffold protein carrying a second [4Fe-4S](2+) cluster] + N(6)-octanoyl-L-lysyl-[protein] + 2 oxidized [2Fe-2S]-[ferredoxin] + 2 S-adenosyl-L-methionine + 4 H(+) = [[Fe-S] cluster scaffold protein] + N(6)-[(R)-dihydrolipoyl]-L-lysyl-[protein] + 4 Fe(3+) + 2 hydrogen sulfide + 2 5'-deoxyadenosine + 2 L-methionine + 2 reduced [2Fe-2S]-[ferredoxin]. The protein operates within protein modification; protein lipoylation via endogenous pathway; protein N(6)-(lipoyl)lysine from octanoyl-[acyl-carrier-protein]: step 2/2. Functionally, catalyzes the radical-mediated insertion of two sulfur atoms into the C-6 and C-8 positions of the octanoyl moiety bound to the lipoyl domains of lipoate-dependent enzymes, thereby converting the octanoylated domains into lipoylated derivatives. The protein is Lipoyl synthase of Neorickettsia sennetsu (strain ATCC VR-367 / Miyayama) (Ehrlichia sennetsu).